The sequence spans 73 residues: Protein DSS1 HOMOLOG ON CHROMOSOME V (73 aa).

It belongs to the DSS1/SEM1 family. In terms of assembly, part of the 26S proteasome. Interacts with BRCA2B. Interacts with EER5. Interacts with UCH1 and UCH2.

Functionally, subunit of the 26S proteasome which plays a role in ubiquitin-dependent proteolysis. Also associates with the TREX-2 complex that is required for transcription-coupled mRNA export. The sequence is that of Protein DSS1 HOMOLOG ON CHROMOSOME V from Arabidopsis thaliana (Mouse-ear cress).